We begin with the raw amino-acid sequence, 283 residues long: MLIIETLPLLRQQIRRLRMEGKRVALVPTMGNLHDGHMKLVDEAKARADVVVVSIFVNPMQFDRPEDLARYPRTLQEDCEKLNKRKVDLVFAPSVKEIYPNGTETHTYVDVPGLSTMLEGASRPGHFRGVSTIVSKLFNLVQPDIACFGEKDFQQLALIRKMVADMGFDIEIVGVPIMRAKDGLALSSRNGYLTAEQCQIAPGLYKVLSSIADKLQAGERDLDEIIAIAGQELNEKGFRADDIQIRDADTLLEVSETSKRAVILVAAWLGDARLIDNKIVELA.

Methionine 30–histidine 37 contacts ATP. The active-site Proton donor is histidine 37. Glutamine 61 is a (R)-pantoate binding site. Glutamine 61 provides a ligand contact to beta-alanine. Glycine 149–aspartate 152 serves as a coordination point for ATP. Glutamine 155 serves as a coordination point for (R)-pantoate. An ATP-binding site is contributed by leucine 186–arginine 189.

This sequence belongs to the pantothenate synthetase family. In terms of assembly, homodimer.

It localises to the cytoplasm. The catalysed reaction is (R)-pantoate + beta-alanine + ATP = (R)-pantothenate + AMP + diphosphate + H(+). The protein operates within cofactor biosynthesis; (R)-pantothenate biosynthesis; (R)-pantothenate from (R)-pantoate and beta-alanine: step 1/1. Its function is as follows. Catalyzes the condensation of pantoate with beta-alanine in an ATP-dependent reaction via a pantoyl-adenylate intermediate. This chain is Pantothenate synthetase, found in Shigella dysenteriae serotype 1 (strain Sd197).